A 268-amino-acid polypeptide reads, in one-letter code: Energy-coupling factor transporter transmembrane protein EcfT (268 aa).

The next 5 membrane-spanning stretches (helical) occupy residues 28-48 (FVFLFIILIFFCHSPLTYLWV), 63-83 (LWFLIKGLTPIFFFLIFTLMM), 107-127 (ILEGLYISLRLIGIVMIATIM), 152-172 (LPVHQLSMIMSIALRFIPTLM), and 248-268 (ISLTMIIPIAIILFVLKYSGV).

The protein belongs to the energy-coupling factor EcfT family. In terms of assembly, forms a stable energy-coupling factor (ECF) transporter complex composed of 2 membrane-embedded substrate-binding proteins (S component), 2 ATP-binding proteins (A component) and 2 transmembrane proteins (T component). May be able to interact with more than 1 S component at a time.

It localises to the cell membrane. Its function is as follows. Transmembrane (T) component of an energy-coupling factor (ECF) ABC-transporter complex. Unlike classic ABC transporters this ECF transporter provides the energy necessary to transport a number of different substrates. The sequence is that of Energy-coupling factor transporter transmembrane protein EcfT from Staphylococcus aureus (strain 04-02981).